The following is a 188-amino-acid chain: UPF0340 protein BH3766 (188 aa).

It belongs to the UPF0340 family.

The chain is UPF0340 protein BH3766 from Halalkalibacterium halodurans (strain ATCC BAA-125 / DSM 18197 / FERM 7344 / JCM 9153 / C-125) (Bacillus halodurans).